A 216-amino-acid polypeptide reads, in one-letter code: MELIDLKAEPRKGRGKSAARHLRNNDAVPAVLYGAKMDSMPISVSTLDLTTMVRVHGSSGLFINLAINGDTVPSRTVMLKEIQMDTFDLKYLHVDFQAINVSEKITISVPVEAVGESVGVKAGGMIQLIRRELDIICKPGDMPEVIQIDTTDLEVGDSVHVEEIDLGADVEIPHDVNFTVLTVVPPTSDVEEEEGDEDLEEDVEETAAEEEEGVEE.

Residues 184–216 are disordered; it reads VPPTSDVEEEEGDEDLEEDVEETAAEEEEGVEE. Residues 189–216 show a composition bias toward acidic residues; the sequence is DVEEEEGDEDLEEDVEETAAEEEEGVEE.

It belongs to the bacterial ribosomal protein bL25 family. CTC subfamily. As to quaternary structure, part of the 50S ribosomal subunit; part of the 5S rRNA/L5/L18/L25 subcomplex. Contacts the 5S rRNA. Binds to the 5S rRNA independently of L5 and L18.

Its function is as follows. This is one of the proteins that binds to the 5S RNA in the ribosome where it forms part of the central protuberance. The protein is Large ribosomal subunit protein bL25 of Desulforapulum autotrophicum (strain ATCC 43914 / DSM 3382 / VKM B-1955 / HRM2) (Desulfobacterium autotrophicum).